A 395-amino-acid polypeptide reads, in one-letter code: MAERHLFTSESVSEGHPDKIADQISDAILDELLKKDPDSRVAVETSVTTGLVLVFGEVSTKAYVNIQQIVRDTIRKIGYTDGKYGFDADNCAVITAIDEQSPDIAQGVDDSLETREGEADPLDKIGAGDQGLMFGYATDETPEYMPLTLVLSHKLMRKIAQLRKDGVISYLRPDAKAEVTVEYDENDKPLRVDTVVLSTQHDPEVSLDQIKKDIKEQVIEAVIPAEYLDDQTKYFINPTGRFVIGGPQGDAGLTGRKIIVDTYGGAAHHGGGAFSGKDATKVDRSASYAARYIAKNIVAAGYAKKAEIQVAYAIGVAEPVSIMINTYGTGTRSEEELIAAVRKAFDLRPAGIIEMLDLKRPIYKQTAAYGHFGRTDVDLPWEHLDKVDELKEILG.

ATP is bound at residue H16. D18 contributes to the Mg(2+) binding site. A K(+)-binding site is contributed by E44. Residues E57 and Q100 each contribute to the L-methionine site. The tract at residues Q100–D110 is flexible loop. Residues D174–K176, R241–F242, D250, R256–K257, A273, and K277 contribute to the ATP site. D250 serves as a coordination point for L-methionine. K281 contributes to the L-methionine binding site.

The protein belongs to the AdoMet synthase family. Homotetramer; dimer of dimers. The cofactor is Mg(2+). K(+) is required as a cofactor.

Its subcellular location is the cytoplasm. It carries out the reaction L-methionine + ATP + H2O = S-adenosyl-L-methionine + phosphate + diphosphate. It participates in amino-acid biosynthesis; S-adenosyl-L-methionine biosynthesis; S-adenosyl-L-methionine from L-methionine: step 1/1. In terms of biological role, catalyzes the formation of S-adenosylmethionine (AdoMet) from methionine and ATP. The overall synthetic reaction is composed of two sequential steps, AdoMet formation and the subsequent tripolyphosphate hydrolysis which occurs prior to release of AdoMet from the enzyme. This chain is S-adenosylmethionine synthase, found in Limosilactobacillus reuteri (strain DSM 20016) (Lactobacillus reuteri).